A 382-amino-acid polypeptide reads, in one-letter code: SOX domain-containing protein dichaete (382 aa).

2 disordered regions span residues 53–142 (GGSP…EGHI) and 346–382 (YPSS…PVLY). A compositionally biased stretch (gly residues) spans 60–69 (AGQGVNGSSG). The span at 96–123 (NSSIGSAGSLGSQSSLGSNGSGLNSSSG) shows a compositional bias: low complexity. Positions 142–210 (IKRPMNAFMV…LHMKEHPDYK (69 aa)) form a DNA-binding region, HMG box. Over residues 347–360 (PSSSTSSPGSSPGT) the composition is skewed to low complexity.

Initially expressed in a pair-rule-like pattern which is rapidly replaced by strong neuroectoderm expression.

The protein resides in the nucleus. Functionally, essential for segmentation and CNS development. May modulate the actions of other transcription factors, including gap and pair-rule proteins. In Drosophila melanogaster (Fruit fly), this protein is SOX domain-containing protein dichaete (D).